Reading from the N-terminus, the 370-residue chain is Popeye domain-containing 2 (370 aa).

Helical transmembrane passes span 51–71 and 78–98; these read ALYI…WGWL and VFIW…HLIF. A disordered region spans residues 275 to 349; that stretch reads PSPPGSEGGS…SGEDSTSLIL (75 aa). The segment covering 283 to 294 has biased composition (low complexity); the sequence is GSASSPPRGSLG. Composition is skewed to polar residues over residues 307–319 and 330–347; these read NPGS…QPDQ and QHWS…STSL.

This sequence belongs to the popeye family. As to expression, expressed in the heart and, slightly, in skeletal muscle.

It localises to the membrane. It is found in the cell membrane. The protein localises to the sarcolemma. Important for striated muscle differentiation and cardiac morphogenesis. Is also required for cardiac conduction system development, plays a regulatory function in heart rate dynamics mediated, at least in part, through cAMP-binding. The protein is Popeye domain-containing 2 of Danio rerio (Zebrafish).